The sequence spans 198 residues: Protein GrpE (198 aa).

Over residues 1–18 (MSEQEQKVEIPEVEKQEE) the composition is skewed to basic and acidic residues. The interval 1–33 (MSEQEQKVEIPEVEKQEEVVVEETQQAEHSQEF) is disordered.

Belongs to the GrpE family. In terms of assembly, homodimer.

The protein localises to the cytoplasm. In terms of biological role, participates actively in the response to hyperosmotic and heat shock by preventing the aggregation of stress-denatured proteins, in association with DnaK and GrpE. It is the nucleotide exchange factor for DnaK and may function as a thermosensor. Unfolded proteins bind initially to DnaJ; upon interaction with the DnaJ-bound protein, DnaK hydrolyzes its bound ATP, resulting in the formation of a stable complex. GrpE releases ADP from DnaK; ATP binding to DnaK triggers the release of the substrate protein, thus completing the reaction cycle. Several rounds of ATP-dependent interactions between DnaJ, DnaK and GrpE are required for fully efficient folding. This is Protein GrpE from Haemophilus influenzae (strain ATCC 51907 / DSM 11121 / KW20 / Rd).